Here is a 341-residue protein sequence, read N- to C-terminus: Anthranilate phosphoribosyltransferase (341 aa).

5-phospho-alpha-D-ribose 1-diphosphate is bound by residues Gly79, 82–83, Thr87, 89–92, 107–115, and Ser119; these read GD, NIST, and KHGNRAVSS. Residue Gly79 participates in anthranilate binding. Ser91 serves as a coordination point for Mg(2+). Anthranilate is bound at residue Asn110. Anthranilate is bound at residue Arg165. Mg(2+)-binding residues include Asp224 and Glu225.

It belongs to the anthranilate phosphoribosyltransferase family. In terms of assembly, homodimer. Mg(2+) serves as cofactor.

The catalysed reaction is N-(5-phospho-beta-D-ribosyl)anthranilate + diphosphate = 5-phospho-alpha-D-ribose 1-diphosphate + anthranilate. The protein operates within amino-acid biosynthesis; L-tryptophan biosynthesis; L-tryptophan from chorismate: step 2/5. In terms of biological role, catalyzes the transfer of the phosphoribosyl group of 5-phosphorylribose-1-pyrophosphate (PRPP) to anthranilate to yield N-(5'-phosphoribosyl)-anthranilate (PRA). In Bacillus cereus (strain AH820), this protein is Anthranilate phosphoribosyltransferase.